The primary structure comprises 144 residues: Large ribosomal subunit protein uL15 (144 aa).

Positions 1–58 (MRLNTLAPAAGSKHAPKRVGRGIGSGLGKTGGRGHKGQKSRSGGKVRPGFEGGQMPLK) are disordered. Residues 21–31 (RGIGSGLGKTG) are compositionally biased toward gly residues. Residues 32–44 (GRGHKGQKSRSGG) are compositionally biased toward basic residues.

Belongs to the universal ribosomal protein uL15 family. In terms of assembly, part of the 50S ribosomal subunit.

Its function is as follows. Binds to the 23S rRNA. This Vibrio parahaemolyticus serotype O3:K6 (strain RIMD 2210633) protein is Large ribosomal subunit protein uL15.